Reading from the N-terminus, the 677-residue chain is Envelope glycoprotein (677 aa).

The signal sequence occupies residues 1–33; sequence MGSGYQLLQLPRERFRKTSFLVWVIILFQRAIS. Residues 34-651 lie on the Extracellular side of the membrane; the sequence is MPLGIVTNST…DLNLWTGWRQ (618 aa). Asn41 carries N-linked (GlcNAc...) asparagine; by host glycosylation. Intrachain disulfides connect Cys54-Cys610, Cys109-Cys136, Cys122-Cys148, Cys512-Cys557, and Cys602-Cys609. A receptor-binding region spans residues 55–202; it reads RDKLSSTSQL…HFWKATPAHE (148 aa). N-linked (GlcNAc...) asparagine; by host glycans are attached at residues Asn205, Asn239, Asn258, Asn269, Asn297, Asn317, Asn318, Asn339, Asn406, Asn420, Asn435, and Asn463. The mucin-like region stretch occupies residues 306–486; sequence NLHFQILSTH…PSQPGLTINT (181 aa). The span at 315–326 shows a compositional bias: polar residues; that stretch reads HTNNSSDQSPAG. Disordered regions lie at residues 315–349, 370–483, and 489–508; these read HTNN…TDSP, NGET…PGLT, and KVAD…RQNT. Composition is skewed to polar residues over residues 370-421, 428-445, and 458-472; these read NGET…ASNE, MNSI…QTKA, and PQET…TSPG. Positions 525 to 540 are fusion peptide; the sequence is GAAAGLAWIPYFGPAA. Residues 555–596 are a coiled coil; the sequence is LICGLRQLANETTQALQLFLRATTELRTYSLLNRKAIDFLLQ. N-linked (GlcNAc...) asparagine; by host glycosylation is present at Asn564. Positions 616-635 form a coiled coil; it reads WTKNITDEINQIKHDFIDNP. The N-linked (GlcNAc...) asparagine; by host glycan is linked to Asn619. Residues 652-672 traverse the membrane as a helical segment; sequence WIPAGIGIIGVIIAIIALLCI. Residues Cys671 and Cys673 are each lipidated (S-palmitoyl cysteine; by host). Residues 673–677 are Cytoplasmic-facing; that stretch reads CKILC.

Belongs to the filoviruses glycoprotein family. In terms of assembly, homotrimer; each monomer consists of a GP1 and a GP2 subunit linked by disulfide bonds. The resulting peplomers (GP1,2) protrude from the virus surface as spikes. Interacts with host integrin alpha-V/ITGAV. Interacts with host CLEC10A. Binds also to host CD209 and CLEC4M/DC-SIGN(R). Interacts with host FOLR1. Interacts with BST2; this interaction inhibits the antiviral effect of BST2 and this allows viral release from infected cells. Interacts with host FCN1; this interaction enhances viral entry. Interacts with host TLR4; this interaction induces cell death in T-lymphocytes or proinflammatory cytokines and SOCS1 production in monocytes. Interacts with host entry receptor NPC1. As to quaternary structure, GP1 and GP2delta are part of GP1,2delta soluble complexes released by ectodomain shedding. Post-translationally, the signal peptide region modulates GP's high mannose glycosylation, thereby determining the efficiency of the interactions with DC-SIGN(R). In terms of processing, N-glycosylated. O-glycosylated in the mucin-like region. Post-translationally, palmitoylation of GP2 is not required for its function. In terms of processing, specific enzymatic cleavages in vivo yield mature proteins. The precursor is processed into GP1 and GP2 by host cell furin in the trans Golgi, and maybe by other host proteases, to yield the mature GP1 and GP2 proteins. The cleavage site corresponds to the furin optimal cleavage sequence [KR]-X-[KR]-R. This cleavage does not seem to be required for function. After the internalization of the virus into cell endosomes, GP1 C-terminus is removed by the endosomal proteases cathepsin B, cathepsin L, or both, leaving a 19-kDa N-terminal fragment which is further digested by cathepsin B. Proteolytic processing of GP1,2 by host ADAM17 can remove the transmembrane anchor of GP2 and leads to shedding of complexes consisting in GP1 and truncated GP2 (GP1,2delta).

The protein resides in the virion membrane. It localises to the host cell membrane. The protein localises to the secreted. Its function is as follows. Trimeric GP1,2 complexes form the virion surface spikes and mediate the viral entry processes, with GP1 acting as the receptor-binding subunit and GP2 as the membrane fusion subunit. At later times of infection, down-regulates the expression of various host cell surface molecules that are essential for immune surveillance and cell adhesion. Down-modulates several integrins including ITGA1, ITGA2, ITGA3, ITGA4, ITGA5, ITGA6, ITGAV and ITGB1. This decrease in cell adhesion molecules may lead to cell detachment, contributing to the disruption of blood vessel integrity and hemorrhages developed during infection (cytotoxicity). Interacts with host TLR4 and thereby stimulates the differentiation and activation of monocytes leading to bystander death of T-lymphocytes. Down-regulates as well the function of host natural killer cells. Counteracts the antiviral effect of host BST2/tetherin that restricts release of progeny virions from infected cells. However, cooperates with VP40 and host BST2 to activate canonical NF-kappa-B pathway in a manner dependent on neddylation. Functionally, functions as a decoy for anti-GP1,2 antibodies thereby contributing to viral immune evasion. Interacts and activates host macrophages and dendritic cells inducing up-regulation of cytokine transcription. This effect is mediated throught activation of host TLR4. In terms of biological role, responsible for binding to the receptor(s) on target cells. Interacts with CD209/DC-SIGN and CLEC4M/DC-SIGNR which act as cofactors for virus entry into dendritic cells (DCs) and endothelial cells. Binding to the macrophage specific lectin CLEC10A also seems to enhance virus infectivity. Interaction with FOLR1/folate receptor alpha may be a cofactor for virus entry in some cell types, although results are contradictory. Members of the Tyro3 receptor tyrosine kinase family also seem to be cell entry factors in filovirus infection. Once attached, the virions are internalized through clathrin-dependent endocytosis and/or macropinocytosis. After internalization of the virus into the endosomes of the host cell, proteolysis of GP1 by two cysteine proteases, CTSB/cathepsin B and CTSL/cathepsin L removes the glycan cap and allows GP1 binding to the host entry receptor NPC1. NPC1-binding, Ca(2+) and acidic pH induce a conformational change of GP2, which unmasks its fusion peptide and permit membranes fusion. Acts as a class I viral fusion protein. Under the current model, the protein has at least 3 conformational states: pre-fusion native state, pre-hairpin intermediate state, and post-fusion hairpin state. During viral and target cell membrane fusion, the coiled coil regions (heptad repeats) assume a trimer-of-hairpins structure, positioning the fusion peptide in close proximity to the C-terminal region of the ectodomain. The formation of this structure appears to drive apposition and subsequent fusion of viral and target cell membranes. Responsible for penetration of the virus into the cell cytoplasm by mediating the fusion of the membrane of the endocytosed virus particle with the endosomal membrane. Low pH in endosomes induces an irreversible conformational change in GP2, releasing the fusion hydrophobic peptide. The chain is Envelope glycoprotein (GP) from Reston ebolavirus (strain Philippines-96) (REBOV).